The following is a 145-amino-acid chain: Peroxide operon regulator (145 aa).

Residues 1–78 (MAAHELKEAL…SGLVKELTYG (78 aa)) are DNA-binding. 4 residues coordinate Zn(2+): C96, C99, C136, and C139.

Belongs to the Fur family. As to quaternary structure, homodimer. Requires Mn(2+) as cofactor. Fe(2+) serves as cofactor. It depends on Zn(2+) as a cofactor. Post-translationally, possibly oxidized on a cysteine residue; the Cys-SOH formed in response to oxidative signaling may rapidly react with a Cys-SH to form a disulfide bond, leading to the loss of metal ion and inactivation of repressor function. Oxidized PerR can be further reduced by thiol reductants and repressor activity restored.

The protein resides in the cytoplasm. In terms of biological role, hydrogen and organic peroxide sensor. Represses the expression of a regulon of peroxide-inducible genes such as katA, ahpC, ahpF, the heme biosynthesis operon (hemAXCDBL), fur, perR, zosA and mrgA. This Bacillus subtilis (strain 168) protein is Peroxide operon regulator (perR).